Reading from the N-terminus, the 429-residue chain is Ribosomal RNA small subunit methyltransferase B (429 aa).

S-adenosyl-L-methionine-binding positions include 254–260 (CSAPGGK), aspartate 277, aspartate 303, and aspartate 322. The Nucleophile role is filled by cysteine 375. The segment at 397–419 (ALSETGTPDQPGQQNLPGGEEGD) is disordered. Positions 400 to 412 (ETGTPDQPGQQNL) are enriched in polar residues.

It belongs to the class I-like SAM-binding methyltransferase superfamily. RsmB/NOP family.

It is found in the cytoplasm. The catalysed reaction is cytidine(967) in 16S rRNA + S-adenosyl-L-methionine = 5-methylcytidine(967) in 16S rRNA + S-adenosyl-L-homocysteine + H(+). Its function is as follows. Specifically methylates the cytosine at position 967 (m5C967) of 16S rRNA. This Salmonella dublin (strain CT_02021853) protein is Ribosomal RNA small subunit methyltransferase B.